Consider the following 258-residue polypeptide: Trans-aconitate 2-methyltransferase (258 aa).

This sequence belongs to the methyltransferase superfamily. Tam family.

The protein localises to the cytoplasm. The catalysed reaction is trans-aconitate + S-adenosyl-L-methionine = (E)-3-(methoxycarbonyl)pent-2-enedioate + S-adenosyl-L-homocysteine. Catalyzes the S-adenosylmethionine monomethyl esterification of trans-aconitate. The protein is Trans-aconitate 2-methyltransferase of Deinococcus radiodurans (strain ATCC 13939 / DSM 20539 / JCM 16871 / CCUG 27074 / LMG 4051 / NBRC 15346 / NCIMB 9279 / VKM B-1422 / R1).